The following is a 278-amino-acid chain: Acetyl-coenzyme A carboxylase carboxyl transferase subunit beta (278 aa).

Residues L23–K278 form the CoA carboxyltransferase N-terminal domain. Zn(2+)-binding residues include C27, C30, C46, and C49. The C4-type zinc-finger motif lies at C27–C49.

It belongs to the AccD/PCCB family. As to quaternary structure, acetyl-CoA carboxylase is a heterohexamer composed of biotin carboxyl carrier protein (AccB), biotin carboxylase (AccC) and two subunits each of ACCase subunit alpha (AccA) and ACCase subunit beta (AccD). Zn(2+) is required as a cofactor.

It localises to the cytoplasm. The catalysed reaction is N(6)-carboxybiotinyl-L-lysyl-[protein] + acetyl-CoA = N(6)-biotinyl-L-lysyl-[protein] + malonyl-CoA. It functions in the pathway lipid metabolism; malonyl-CoA biosynthesis; malonyl-CoA from acetyl-CoA: step 1/1. In terms of biological role, component of the acetyl coenzyme A carboxylase (ACC) complex. Biotin carboxylase (BC) catalyzes the carboxylation of biotin on its carrier protein (BCCP) and then the CO(2) group is transferred by the transcarboxylase to acetyl-CoA to form malonyl-CoA. The protein is Acetyl-coenzyme A carboxylase carboxyl transferase subunit beta of Chlorobaculum tepidum (strain ATCC 49652 / DSM 12025 / NBRC 103806 / TLS) (Chlorobium tepidum).